Here is a 716-residue protein sequence, read N- to C-terminus: DNA ligase (716 aa).

Residues 42–46, 91–92, and glutamate 125 each bind NAD(+); these read DAEYD and SL. Lysine 127 serves as the catalytic N6-AMP-lysine intermediate. 4 residues coordinate NAD(+): arginine 148, glutamate 184, lysine 300, and lysine 324. Zn(2+) is bound by residues cysteine 429, cysteine 432, cysteine 447, and cysteine 453. The BRCT domain occupies 638 to 716; sequence TASSPIAGKI…EEAWLQLIEG (79 aa).

Belongs to the NAD-dependent DNA ligase family. LigA subfamily. It depends on Mg(2+) as a cofactor. Mn(2+) is required as a cofactor.

It carries out the reaction NAD(+) + (deoxyribonucleotide)n-3'-hydroxyl + 5'-phospho-(deoxyribonucleotide)m = (deoxyribonucleotide)n+m + AMP + beta-nicotinamide D-nucleotide.. DNA ligase that catalyzes the formation of phosphodiester linkages between 5'-phosphoryl and 3'-hydroxyl groups in double-stranded DNA using NAD as a coenzyme and as the energy source for the reaction. It is essential for DNA replication and repair of damaged DNA. This Bartonella henselae (strain ATCC 49882 / DSM 28221 / CCUG 30454 / Houston 1) (Rochalimaea henselae) protein is DNA ligase.